A 146-amino-acid chain; its full sequence is Myoglobin (146 aa).

Positions Ala-2–Lys-140 constitute a Globin domain. Nitrite is bound at residue His-59. His-59 lines the O2 pocket. A heme b-binding site is contributed by His-88.

It belongs to the globin family. As to quaternary structure, monomeric.

It localises to the cytoplasm. Its subcellular location is the sarcoplasm. The catalysed reaction is Fe(III)-heme b-[protein] + nitric oxide + H2O = Fe(II)-heme b-[protein] + nitrite + 2 H(+). It carries out the reaction H2O2 + AH2 = A + 2 H2O. Monomeric heme protein which primary function is to store oxygen and facilitate its diffusion within muscle tissues. Reversibly binds oxygen through a pentacoordinated heme iron and enables its timely and efficient release as needed during periods of heightened demand. Depending on the oxidative conditions of tissues and cells, and in addition to its ability to bind oxygen, it also has a nitrite reductase activity whereby it regulates the production of bioactive nitric oxide. Under stress conditions, like hypoxia and anoxia, it also protects cells against reactive oxygen species thanks to its pseudoperoxidase activity. This chain is Myoglobin (mb), found in Katsuwonus pelamis (Skipjack tuna).